A 445-amino-acid polypeptide reads, in one-letter code: Ribosome biogenesis protein YTM1 (445 aa).

The ubiquitin-like (UBL) domain stretch occupies residues 8-89; it reads VKVKFFTREQ…EAVLNVEYTR (82 aa). Residues 99–445 form a sufficient for interaction with ERB1 and association with 66S pre-ribosomes region; the sequence is SFSNEDWVSA…FNKGDNIFKN (347 aa). 7 WD repeats span residues 101-138, 140-178, 195-232, 270-310, 312-351, 358-398, and 409-445; these read SNEDWVSALDVGAERIVSGSYDGVVRTWNLSGKIEKQY, GHTGAVRAVKFISSTRLVSGGNDRTLRLWKTKNDDVKHV, GHQAPVVSVDVQGDRILSASYDNSIGFWSTNHKDMTAV, SHKA…CVDT, STSYSLLSMVELPKLRLLACGSSARHITLHDPRADSSAKI, GHKN…SIYT, and GINDKVFAVKWAKGVGIISGGQDKKIQFNKGDNIFKN.

The protein belongs to the WD repeat WDR12/YTM1 family. In terms of assembly, component of the NOP7 complex, composed of ERB1, NOP7 and YTM1. The complex is held together by ERB1, which interacts with NOP7 via its N-terminal domain and with YTM1 via a high-affinity interaction between the seven-bladed beta-propeller domains of the 2 proteins. The NOP7 complex associates with the 66S pre-ribosome. Interacts (via UBL domain) with MDN1 (via VWFA/MIDAS domain).

It is found in the nucleus. The protein localises to the nucleolus. Its subcellular location is the nucleoplasm. In terms of biological role, component of the NOP7 complex, which is required for maturation of the 25S and 5.8S ribosomal RNAs and formation of the 60S ribosome. This Eremothecium gossypii (strain ATCC 10895 / CBS 109.51 / FGSC 9923 / NRRL Y-1056) (Yeast) protein is Ribosome biogenesis protein YTM1.